The chain runs to 366 residues: Galactose-1-phosphate uridylyltransferase (366 aa).

The residue at position 27 (Ser-27) is a Phosphoserine. Zn(2+)-binding residues include Cys-54 and Cys-57. UDP-alpha-D-glucose is bound by residues Ala-63 and 79-80 (ND). Zn(2+) is bound at residue His-124. Asn-169 is a binding site for UDP-alpha-D-glucose. Residue His-180 participates in Zn(2+) binding. His-182 acts as the Tele-UMP-histidine intermediate in catalysis. Gln-184 lines the UDP-alpha-D-glucose pocket. Fe cation is bound by residues Glu-198, His-297, His-314, and His-316. Residues 329-332 (KFLV) and 334-335 (FE) contribute to the UDP-alpha-D-glucose site.

This sequence belongs to the galactose-1-phosphate uridylyltransferase type 1 family. As to quaternary structure, homodimer. The cofactor is Zn(2+).

It catalyses the reaction alpha-D-galactose 1-phosphate + UDP-alpha-D-glucose = alpha-D-glucose 1-phosphate + UDP-alpha-D-galactose. Its pathway is carbohydrate metabolism; galactose metabolism. The polypeptide is Galactose-1-phosphate uridylyltransferase (GAL7) (Saccharomyces cerevisiae (strain ATCC 204508 / S288c) (Baker's yeast)).